We begin with the raw amino-acid sequence, 1732 residues long: Lys-gingipain W83 (1732 aa).

An N-terminal signal peptide occupies residues M1–I24. A propeptide spanning residues K25–R228 is cleaved from the precursor. Ca(2+)-binding residues include D313, D337, D339, F341, and E343. The active-site Proton donor is the H444. Catalysis depends on C477, which acts as the Nucleophile. The Ca(2+) site is built by F482 and E491. The tract at residues D965–S988 is disordered. The span at T970–N980 shows a compositional bias: pro residues. The Ca(2+) site is built by S988, E990, D1001, D1003, D1005, H1007, S1022, G1024, N1043, D1146, E1147, D1433, E1435, D1446, D1448, D1450, N1452, S1470, I1472, N1490, and D1595.

Belongs to the peptidase C25 family. Post-translationally, proteolytically cleaved into a catalytic subunit and three adhesins. Arg-gingipain is involved in this post-translational processing.

It localises to the secreted. The catalysed reaction is Endopeptidase with strict specificity for lysyl bonds.. Cysteine proteinase with a strong preference for substrates with Lys in the P1 position. Hydrolyzes bovine hemoglobin, bovine serum albumin, casein, human placental type I collagen and human IgA and IgG. Disrupts the functions of polymorphonuclear leukocytes. May act as a virulence factor in the development of peridontal disease. Involved in the coaggregation of P.gingivalis with other oral bacteria. Has hemolytic activity; this is mediated by the adhesin domains and does not require the catalytic domain. The sequence is that of Lys-gingipain W83 from Porphyromonas gingivalis (Bacteroides gingivalis).